A 174-amino-acid polypeptide reads, in one-letter code: Crossover junction endodeoxyribonuclease RuvC (174 aa).

Residues D8, E67, and D139 contribute to the active site. 3 residues coordinate Mg(2+): D8, E67, and D139.

Belongs to the RuvC family. Homodimer which binds Holliday junction (HJ) DNA. The HJ becomes 2-fold symmetrical on binding to RuvC with unstacked arms; it has a different conformation from HJ DNA in complex with RuvA. In the full resolvosome a probable DNA-RuvA(4)-RuvB(12)-RuvC(2) complex forms which resolves the HJ. It depends on Mg(2+) as a cofactor.

The protein resides in the cytoplasm. It catalyses the reaction Endonucleolytic cleavage at a junction such as a reciprocal single-stranded crossover between two homologous DNA duplexes (Holliday junction).. Its function is as follows. The RuvA-RuvB-RuvC complex processes Holliday junction (HJ) DNA during genetic recombination and DNA repair. Endonuclease that resolves HJ intermediates. Cleaves cruciform DNA by making single-stranded nicks across the HJ at symmetrical positions within the homologous arms, yielding a 5'-phosphate and a 3'-hydroxyl group; requires a central core of homology in the junction. The consensus cleavage sequence is 5'-(A/T)TT(C/G)-3'. Cleavage occurs on the 3'-side of the TT dinucleotide at the point of strand exchange. HJ branch migration catalyzed by RuvA-RuvB allows RuvC to scan DNA until it finds its consensus sequence, where it cleaves and resolves the cruciform DNA. This is Crossover junction endodeoxyribonuclease RuvC from Pseudoalteromonas translucida (strain TAC 125).